Reading from the N-terminus, the 206-residue chain is MSSRVVKSRSKNPYAAVQVDPDSDYITPGTLDLEQLFWTSTGAQYAHVNQVWPSVYVGDEKTALERPGLRVLGITHVLNAAEGKWNNVLTGAHYYTDMDIQYFGVEADDKPTFNISQFFCSATQFIHEALSHPKVLVHCVMGRSRSAALVLAYLMMEHGLTVVDAIEHVRQRRCVLPNHGFLRQLRALDITLQEDRLRQKRGMQEQ.

In terms of domain architecture, Tyrosine-protein phosphatase spans 47–194 (HVNQVWPSVY…LRALDITLQE (148 aa)). Residue 138–145 (HCVMGRSR) participates in substrate binding. Residue Cys-139 is the Phosphocysteine intermediate of the active site.

The protein belongs to the protein-tyrosine phosphatase family. Non-receptor class dual specificity subfamily.

Its subcellular location is the cytoplasm. The protein resides in the nucleus. The catalysed reaction is O-phospho-L-tyrosyl-[protein] + H2O = L-tyrosyl-[protein] + phosphate. The enzyme catalyses O-phospho-L-seryl-[protein] + H2O = L-seryl-[protein] + phosphate. It carries out the reaction O-phospho-L-threonyl-[protein] + H2O = L-threonyl-[protein] + phosphate. Functionally, dual specificity phosphatase able to dephosphorylate phosphotyrosine, phosphoserine and phosphothreonine residues within the same substrate, with a preference for phosphotyrosine as a substrate. Involved in the modulation of AMPK and MAPK1/2 signaling pathways. This is Dual specificity phosphatase 29 (dusp29) from Gasterosteus aculeatus (Three-spined stickleback).